The sequence spans 233 residues: Large ribosomal subunit protein uL3 (233 aa).

The tract at residues 145-172 (FGSQRASHGNSRSHRVPGSIGQAQDPGR) is disordered. Glutamine 168 is subject to N5-methylglutamine.

It belongs to the universal ribosomal protein uL3 family. As to quaternary structure, part of the 50S ribosomal subunit. Forms a cluster with proteins L14 and L19. Methylated by PrmB.

One of the primary rRNA binding proteins, it binds directly near the 3'-end of the 23S rRNA, where it nucleates assembly of the 50S subunit. This Bordetella petrii (strain ATCC BAA-461 / DSM 12804 / CCUG 43448) protein is Large ribosomal subunit protein uL3.